We begin with the raw amino-acid sequence, 163 residues long: NADH-quinone oxidoreductase subunit I (163 aa).

4Fe-4S ferredoxin-type domains are found at residues 53 to 83 (LRRY…IEAG) and 94 to 123 (VRYD…EGPN). Positions 63, 66, 69, 73, 103, 106, 109, and 113 each coordinate [4Fe-4S] cluster.

This sequence belongs to the complex I 23 kDa subunit family. NDH-1 is composed of 14 different subunits. Subunits NuoA, H, J, K, L, M, N constitute the membrane sector of the complex. [4Fe-4S] cluster is required as a cofactor.

It localises to the cell inner membrane. The catalysed reaction is a quinone + NADH + 5 H(+)(in) = a quinol + NAD(+) + 4 H(+)(out). Its function is as follows. NDH-1 shuttles electrons from NADH, via FMN and iron-sulfur (Fe-S) centers, to quinones in the respiratory chain. The immediate electron acceptor for the enzyme in this species is believed to be ubiquinone. Couples the redox reaction to proton translocation (for every two electrons transferred, four hydrogen ions are translocated across the cytoplasmic membrane), and thus conserves the redox energy in a proton gradient. This is NADH-quinone oxidoreductase subunit I from Bartonella henselae (strain ATCC 49882 / DSM 28221 / CCUG 30454 / Houston 1) (Rochalimaea henselae).